A 135-amino-acid polypeptide reads, in one-letter code: Holo-[acyl-carrier-protein] synthase (135 aa).

Mg(2+)-binding residues include D8 and E57.

The protein belongs to the P-Pant transferase superfamily. AcpS family. Mg(2+) serves as cofactor.

It localises to the cytoplasm. The enzyme catalyses apo-[ACP] + CoA = holo-[ACP] + adenosine 3',5'-bisphosphate + H(+). Its function is as follows. Transfers the 4'-phosphopantetheine moiety from coenzyme A to a Ser of acyl-carrier-protein. This chain is Holo-[acyl-carrier-protein] synthase, found in Xanthobacter autotrophicus (strain ATCC BAA-1158 / Py2).